We begin with the raw amino-acid sequence, 703 residues long: Stonustoxin subunit alpha (703 aa).

Positions 2–265 (SSDLVMPALG…KAQQLIQEIN (264 aa)) are structural MACPF/CDC pore-forming domain. The interval 266–385 (VSKVRRIHTT…GMVEGTQAKF (120 aa)) is structural FAT domain. The interval 386-517 (VSNQTELDRE…PRMPFVQGYK (132 aa)) is thioredoxin (THX) domain. The B30.2/SPRY domain maps to 508 to 703 (PRMPFVQGYK…AGNHGTLRLL (196 aa)).

It belongs to the SNTX/VTX toxin family. As to quaternary structure, heterodimer of alpha and beta subunits; non-covalently linked. Intrachain disulfide bonds may be present in the heterodimer. In terms of processing, not glycosylated. Expressed by the venom gland.

It is found in the secreted. This lethal (towards mammals) heterodimer induces hemolytic activities due to its ability to form pores in the cell membrane. The pore may be composed of 10 SNTX-alpha/beta heterodimers. The toxin elicits potent hypotension which is endothelium-dependent and appears to be mediated by the nitric oxide pathway and activation of potassium channels. In addition, it displays edema-inducing activities, increases vascular permeability. It also shows myotoxic activities and interferes irreversibly with neuromuscular function. It also induces irreversible platelet aggregation in rabbit or rat (but not in human or mouse) whole blood. In addition, it has been observed to increase spontaneous quantal acetylcholine release from isolated frog cutaneous pectoris motor endings. The sequence is that of Stonustoxin subunit alpha from Synanceia horrida (Estuarine stonefish).